Consider the following 562-residue polypeptide: Formate--tetrahydrofolate ligase (562 aa).

70–77 (TPAGEGKS) is a binding site for ATP.

This sequence belongs to the formate--tetrahydrofolate ligase family.

It catalyses the reaction (6S)-5,6,7,8-tetrahydrofolate + formate + ATP = (6R)-10-formyltetrahydrofolate + ADP + phosphate. Its pathway is one-carbon metabolism; tetrahydrofolate interconversion. The polypeptide is Formate--tetrahydrofolate ligase (Paenarthrobacter aurescens (strain TC1)).